We begin with the raw amino-acid sequence, 318 residues long: Ribosomal RNA small subunit methyltransferase A (318 aa).

Residues Asn40, Val42, Gly67, Glu88, Asp118, and Asn137 each coordinate S-adenosyl-L-methionine. Positions Ser295–Gly305 are enriched in basic and acidic residues. Residues Ser295 to Arg318 form a disordered region.

It belongs to the class I-like SAM-binding methyltransferase superfamily. rRNA adenine N(6)-methyltransferase family. RsmA subfamily.

It is found in the cytoplasm. The enzyme catalyses adenosine(1518)/adenosine(1519) in 16S rRNA + 4 S-adenosyl-L-methionine = N(6)-dimethyladenosine(1518)/N(6)-dimethyladenosine(1519) in 16S rRNA + 4 S-adenosyl-L-homocysteine + 4 H(+). Functionally, specifically dimethylates two adjacent adenosines (A1518 and A1519) in the loop of a conserved hairpin near the 3'-end of 16S rRNA in the 30S particle. May play a critical role in biogenesis of 30S subunits. The polypeptide is Ribosomal RNA small subunit methyltransferase A (Mycolicibacterium paratuberculosis (strain ATCC BAA-968 / K-10) (Mycobacterium paratuberculosis)).